The primary structure comprises 271 residues: Mannosyl-3-phosphoglycerate phosphatase (271 aa).

The active-site Nucleophile is the Asp-13. Residues Asp-13, Asp-15, and Asp-214 each contribute to the Mg(2+) site.

It belongs to the HAD-like hydrolase superfamily. MPGP family. The cofactor is Mg(2+).

The protein localises to the cytoplasm. It carries out the reaction 2-O-(alpha-D-mannosyl)-3-phosphoglycerate + H2O = (2R)-2-O-(alpha-D-mannosyl)-glycerate + phosphate. The protein is Mannosyl-3-phosphoglycerate phosphatase (yedP) of Escherichia coli O157:H7.